The chain runs to 106 residues: Small ribosomal subunit protein uS10 (106 aa).

It belongs to the universal ribosomal protein uS10 family. In terms of assembly, part of the 30S ribosomal subunit.

Involved in the binding of tRNA to the ribosomes. This chain is Small ribosomal subunit protein uS10, found in Caldicellulosiruptor saccharolyticus (strain ATCC 43494 / DSM 8903 / Tp8T 6331).